A 114-amino-acid polypeptide reads, in one-letter code: Large ribosomal subunit protein uL24 (114 aa).

This sequence belongs to the universal ribosomal protein uL24 family. As to quaternary structure, part of the 50S ribosomal subunit.

In terms of biological role, one of two assembly initiator proteins, it binds directly to the 5'-end of the 23S rRNA, where it nucleates assembly of the 50S subunit. One of the proteins that surrounds the polypeptide exit tunnel on the outside of the subunit. This Thermomicrobium roseum (strain ATCC 27502 / DSM 5159 / P-2) protein is Large ribosomal subunit protein uL24.